The chain runs to 476 residues: Cytosolic iron-sulfur assembly component 3 (476 aa).

An N-acetylalanine modification is found at Ala-2. Positions 24, 71, 74, 77, 190, 246, 395, and 399 each coordinate [4Fe-4S] cluster.

This sequence belongs to the NARF family. In terms of assembly, external component of the CIA complex. In the CIA complex, interacts directly with CIAO1 and MMS19.

Component of the cytosolic iron-sulfur protein assembly (CIA) complex, a multiprotein complex that mediates the incorporation of iron-sulfur cluster into extramitochondrial Fe/S proteins. Seems to negatively regulate the level of HIF1A expression, although this effect could be indirect. The chain is Cytosolic iron-sulfur assembly component 3 from Rattus norvegicus (Rat).